Here is a 67-residue protein sequence, read N- to C-terminus: Conotoxin Cl6.10 (67 aa).

A signal peptide spans 1–24; the sequence is MKLTCVLIAAVLLLAVCQLDSADA. The propeptide occupies 25-37; the sequence is TAYMRKDPSLRSP. Cystine bridges form between C43–C57, C50–C61, and C56–C65.

Belongs to the conotoxin O1 superfamily. In terms of tissue distribution, expressed by the venom duct.

The protein localises to the secreted. The polypeptide is Conotoxin Cl6.10 (Californiconus californicus (California cone)).